Consider the following 334-residue polypeptide: Probable tRNA pseudouridine synthase B (334 aa).

Asp-82 serves as the catalytic Nucleophile. A PUA domain is found at 250–325; it reads LPKIWIKDSA…IAVDVEKVFM (76 aa).

The protein belongs to the pseudouridine synthase TruB family. Type 2 subfamily.

The enzyme catalyses uridine(55) in tRNA = pseudouridine(55) in tRNA. Its function is as follows. Could be responsible for synthesis of pseudouridine from uracil-55 in the psi GC loop of transfer RNAs. The polypeptide is Probable tRNA pseudouridine synthase B (Pyrococcus abyssi (strain GE5 / Orsay)).